Reading from the N-terminus, the 242-residue chain is 1-(5-phosphoribosyl)-5-[(5-phosphoribosylamino)methylideneamino] imidazole-4-carboxamide isomerase (242 aa).

Catalysis depends on Asp8, which acts as the Proton acceptor. Asp129 functions as the Proton donor in the catalytic mechanism.

Belongs to the HisA/HisF family.

Its subcellular location is the cytoplasm. The catalysed reaction is 1-(5-phospho-beta-D-ribosyl)-5-[(5-phospho-beta-D-ribosylamino)methylideneamino]imidazole-4-carboxamide = 5-[(5-phospho-1-deoxy-D-ribulos-1-ylimino)methylamino]-1-(5-phospho-beta-D-ribosyl)imidazole-4-carboxamide. Its pathway is amino-acid biosynthesis; L-histidine biosynthesis; L-histidine from 5-phospho-alpha-D-ribose 1-diphosphate: step 4/9. The chain is 1-(5-phosphoribosyl)-5-[(5-phosphoribosylamino)methylideneamino] imidazole-4-carboxamide isomerase from Dictyoglomus thermophilum (strain ATCC 35947 / DSM 3960 / H-6-12).